A 147-amino-acid polypeptide reads, in one-letter code: Protein J1 homolog (147 aa).

The protein belongs to the chordopoxvirinae J1 family. In terms of assembly, homodimer. Part of a complex composed of A30, G7, F10 kinase, A15, D2, D3, and J1. Interacts with A45.

Its subcellular location is the virion. The protein localises to the host cytoplasm. Its function is as follows. Late protein which is a part of a large complex required for early virion morphogenesis. This complex participates in the formation of virosomes and the incorporation of virosomal contents into nascent immature virions. J1 protein is required for DNA packaging during immature virions (IV) formation. This Sheeppox virus (strain KS-1) (SPPV) protein is Protein J1 homolog.